We begin with the raw amino-acid sequence, 406 residues long: CinA-like protein (406 aa).

Belongs to the CinA family.

The protein is CinA-like protein of Thermomicrobium roseum (strain ATCC 27502 / DSM 5159 / P-2).